The primary structure comprises 95 residues: Integration host factor subunit beta (95 aa).

It belongs to the bacterial histone-like protein family. In terms of assembly, heterodimer of an alpha and a beta chain.

This protein is one of the two subunits of integration host factor, a specific DNA-binding protein that functions in genetic recombination as well as in transcriptional and translational control. In Shewanella amazonensis (strain ATCC BAA-1098 / SB2B), this protein is Integration host factor subunit beta.